A 317-amino-acid polypeptide reads, in one-letter code: UV DNA damage endonuclease (317 aa).

The protein belongs to the uve1/UvsE family.

Component in a DNA repair pathway. Removal of UV LIGHT damaged nucleotides. Recognizes pyrimidine dimers and cleave a phosphodiester bond immediately 5' to the lesion. The chain is UV DNA damage endonuclease from Bacillus mycoides (strain KBAB4) (Bacillus weihenstephanensis).